Reading from the N-terminus, the 219-residue chain is MADVNDFLRNWGGRQEPTISEKIKNLFKSQQPLRYRLVMANYRLRTTISRLDVYISKLQERDRSLFEKVVESQISKDSARAAMYANEIAEIRKITKQLLTTEIALEQVQLRLETITEIGDIFTSLVPVIGVIRELRNVMKGVMPELSIELADLEEGLQEVVLEAGEFTGARVDFATSSPEARKILDEASAVAEQRMKEKFPSLPSFATSVDQKTNANQK.

Its function is as follows. Part of a cell division machinery. This is Cell division protein B2 from Sulfolobus acidocaldarius (strain ATCC 33909 / DSM 639 / JCM 8929 / NBRC 15157 / NCIMB 11770).